We begin with the raw amino-acid sequence, 123 residues long: Alpha-lactalbumin (123 aa).

In terms of domain architecture, C-type lysozyme spans 1-123 (KQFTKCELSQ…KLEQWLCEKE (123 aa)). 4 cysteine pairs are disulfide-bonded: cysteine 6–cysteine 120, cysteine 28–cysteine 111, cysteine 61–cysteine 77, and cysteine 73–cysteine 91. N-linked (GlcNAc...) asparagine glycosylation is present at asparagine 45. The Ca(2+) site is built by lysine 79, aspartate 82, aspartate 84, aspartate 87, and aspartate 88.

It belongs to the glycosyl hydrolase 22 family. In terms of assembly, lactose synthase (LS) is a heterodimer of a catalytic component, beta1,4-galactosyltransferase (beta4Gal-T1) and a regulatory component, alpha-lactalbumin (LA). In terms of tissue distribution, mammary gland specific. Secreted in milk.

It localises to the secreted. Regulatory subunit of lactose synthase, changes the substrate specificity of galactosyltransferase in the mammary gland making glucose a good acceptor substrate for this enzyme. This enables LS to synthesize lactose, the major carbohydrate component of milk. In other tissues, galactosyltransferase transfers galactose onto the N-acetylglucosamine of the oligosaccharide chains in glycoproteins. The protein is Alpha-lactalbumin (LALBA) of Papio cynocephalus (Yellow baboon).